The chain runs to 432 residues: EF-hand calcium-binding domain-containing protein 3 (432 aa).

EF-hand domains follow at residues 45 to 80 (AQLEAFRNAYNFFTKDRTGCIDSHGLMSTVAKLGMN) and 81 to 116 (LNAYDIYNELKCADRDRDGKINFSDFIDVLTDKKLF). Residues D94, D96, D98, K100, and D105 each coordinate Ca(2+). Y273 bears the Phosphotyrosine mark. The disordered stretch occupies residues 394–432 (NVNKTSPSNSGLSSPSDLSESDPETGRKRKRKSSRGFRQ). Residues 399–411 (SPSNSGLSSPSDL) show a composition bias toward low complexity. A compositionally biased stretch (basic residues) spans 420–432 (RKRKRKSSRGFRQ).

This is EF-hand calcium-binding domain-containing protein 3 (Efcab3) from Rattus norvegicus (Rat).